The primary structure comprises 263 residues: HTH-type transcriptional regulator KdgR (263 aa).

Residues 13 to 74 (VSSVLKVFGI…GESEKYSLTL (62 aa)) form the HTH iclR-type domain. Positions 34–53 (ITELSQRVMMSKSTVYRFLQ) form a DNA-binding region, H-T-H motif. Residues 89–258 (LIRSADIQMR…ARKISAQMGY (170 aa)) form the IclR-ED domain.

The protein localises to the cytoplasm. In terms of biological role, transcriptional repressor that negatively regulates the expression of kdgT, kdgK and kdgA, which encode proteins involved in transport and catabolism of 2-keto-3-deoxygluconate (KDG). Also represses expression of eda, which encodes the Entner-Doudoroff aldolase, by binding to its P2 promoter region. The chain is HTH-type transcriptional regulator KdgR from Escherichia coli (strain K12).